The following is a 585-amino-acid chain: MTDYFEVHARDGAARIGELRLSDSVTTPAVVDDVLADAGSLWAAERELPDGSDDVLTVLPHRSLPAGSADEVRESFSVAYPDVDFPSAAVVTADTADDFGADAYVLSDAQGFVGHARAFRDNVIEAKENLPADTALVLSGVATPRNVSLLVYAGVDLVDEKLARARGLEGFYLTSDGEYFLEDLDELPCACEACRKPASEFTRADAADHNANALRAELARVRRRVRDGRLRDYVEGQARHDQWLTALFRRFDQQYSFMEQRVPVIRDSELTAASEESIDRVEIQRFADRVTKRYRNRFDNPLVLLPCSAKKPYSESQSHRQFQEAVQYRAHMVSMTSPIGVVPQELELTYPAQHYDSVVTGDWSEDEKSFVAEVLRRYLERNDYPRIIAHLPPGAYTDIVERVADDLDLDVEFTVSEHPTTTESIGNLMRTLDGEPKFTREEREHNVVKALADYQLGPDAGDALFSDVALEMTSRYPKLQVWNDAGVQLATMVPQYGVLSFTLEGAKVWRDSDAPTKTVEIDGFVPHGSVLAPGVVDADEDIRPGDEVVVEGPKAFAIGRAEMGGRELVESTRGIGVEIRHVEER.

A PUA domain is found at threonine 516–glutamate 584.

It belongs to the archaeosine synthase type 1 family. Homodimer.

The catalysed reaction is 7-cyano-7-carbaguanosine(15) in tRNA + L-glutamine + H2O = archaeosine(15) in tRNA + L-glutamate. It functions in the pathway tRNA modification; archaeosine-tRNA biosynthesis. Is responsible for the final step in the biosynthesis of archaeosine, a modified nucleoside present in the dihydrouridine loop (D-loop) of archaeal tRNA. Catalyzes the conversion of 7-cyano-7-deazaguanine (preQ0)-modified tRNA to archaeosine-tRNA, transforming a nitrile group to a formamidine group. The protein is Archaeosine synthase of Haloferax volcanii (strain ATCC 29605 / DSM 3757 / JCM 8879 / NBRC 14742 / NCIMB 2012 / VKM B-1768 / DS2) (Halobacterium volcanii).